Here is a 552-residue protein sequence, read N- to C-terminus: Harmonin (552 aa).

The tract at residues 1–86 (MDRKVAREFR…LTPRRSRKLK (86 aa)) is N-terminal domain. PDZ domains follow at residues 87–169 (EVRL…HIGL) and 211–293 (KVFI…AAAG). The mediates interaction with MYO7B stretch occupies residues 194 to 552 (GVRGSLGSPG…KEYDDELTFF (359 aa)). Residue S219 is modified to Phosphoserine. Residues 310 to 377 (RELQRQELLM…EKFKKQWEED (68 aa)) adopt a coiled-coil conformation. Positions 401–427 (KPKYDQGVEPELEPADDLDGGTEEQGE) are disordered. Over residues 408–427 (VEPELEPADDLDGGTEEQGE) the composition is skewed to acidic residues. Residues 452 to 537 (DVRLLRIKKE…QGGDWIDLVV (86 aa)) enclose the PDZ 3 domain.

Part of the IMAC/intermicrovillar adhesion complex/intermicrovillar tip-link complex composed of ANKS4B, MYO7B, USH1C, CDHR2 and CDHR5. Part of a complex composed of USH1C, USH1G and MYO7A. Interacts with F-actin. Interacts with USH2A. Interacts with SLC4A7. Interacts (via PDZ1 domain) with the C-terminus of USHBP1. Interacts (via N-terminus and PDZ 2 domain) with CDH23. Interacts with USH1G. Interacts with MYO7B. Interacts with CDHR2 and CDHR5; may mediate their interaction with MYO7B at the microvilli tip. Interacts (via PDZ 1 domain) with ANKS4B. Interacts (via PDZ 1 domain) with DOCK4. As to expression, expressed in small intestine, colon, kidney, eye and weakly in pancreas. Expressed also in vestibule of the inner ear.

It is found in the cytoplasm. Its subcellular location is the cytosol. The protein resides in the cytoskeleton. The protein localises to the cell projection. It localises to the microvillus. Anchoring/scaffolding protein that is a part of the functional network formed by USH1C, USH1G, CDH23 and MYO7A that mediates mechanotransduction in cochlear hair cells. Required for normal development and maintenance of cochlear hair cell bundles. As part of the intermicrovillar adhesion complex/IMAC plays a role in brush border differentiation, controlling microvilli organization and length. Probably plays a central regulatory role in the assembly of the complex, recruiting CDHR2, CDHR5 and MYO7B to the microvilli tips. This is Harmonin (USH1C) from Homo sapiens (Human).